The chain runs to 282 residues: Ribosome biogenesis GTPase A (282 aa).

The region spanning 14–178 (RREVTEKLKL…LLDTPGILWP (165 aa)) is the CP-type G domain. Residues 58–61 (NKAD), 86–87 (NS), 130–135 (NVGKST), and Gly-174 contribute to the GTP site.

It belongs to the TRAFAC class YlqF/YawG GTPase family. MTG1 subfamily. Interacts with ctc. Interacts with the immature 50S ribosome subunit. 2 molecules of rbgA bind to one 50S subunit.

The protein resides in the cytoplasm. In terms of biological role, essential protein that is required for a late step of 50S ribosomal subunit assembly. Has GTPase activity that is stimulated by interaction with the immature 50S ribosome subunit. Binds to the 23S rRNA. Required for the association of ribosomal proteins rplP and rpmA with the large subunit. The chain is Ribosome biogenesis GTPase A from Bacillus pumilus (strain SAFR-032).